A 143-amino-acid polypeptide reads, in one-letter code: Putative pre-16S rRNA nuclease (143 aa).

Belongs to the YqgF nuclease family.

The protein resides in the cytoplasm. Its function is as follows. Could be a nuclease involved in processing of the 5'-end of pre-16S rRNA. The protein is Putative pre-16S rRNA nuclease (ybeB) of Lactococcus lactis subsp. lactis (strain IL1403) (Streptococcus lactis).